We begin with the raw amino-acid sequence, 618 residues long: Grainyhead-like protein 1 homolog (618 aa).

The transcription activation stretch occupies residues 1-91 (MTQEYDNKRP…EVEHPEPDHS (91 aa)). Basic and acidic residues predominate over residues 74-92 (RRSSTAKPEVEHPEPDHSK). The disordered stretch occupies residues 74–94 (RRSSTAKPEVEHPEPDHSKRN). T208 carries the phosphothreonine modification. Residues 248-474 (SGNNFEYTLE…DLDTQPVLFI (227 aa)) form the Grh/CP2 DB domain. Interaction with DNA stretches follow at residues 380 to 389 (TDFSSQKGVK) and 427 to 430 (RKIR).

It belongs to the grh/CP2 family. Grainyhead subfamily. In terms of assembly, binds DNA as homodimer. Homodimer, also forms heterodimers with GRHL2 or GRHL3. Post-translationally, methylation at Arg-9 and Lys-116 may be involved in regulating transcriptional activation. Isoform 1 is highly expressed in brain, pancreas, tonsil, placenta and kidney. Isoform 2 is highly expressed in brain and liver. Expressed at very low levels in non-steroidogenic cells.

It is found in the nucleus. Functionally, transcription factor involved in epithelial development. Binds directly to the consensus DNA sequence 5'-AACCGGTT-3'. Important regulator of DSG1 in the context of hair anchorage and epidermal differentiation, participates in the maintenance of the skin barrier. There is no genetic interaction with GRHL3, nor functional cooperativity due to diverse target gene selectivity during epithelia development. May play a role in regulating glucose homeostasis and insulin signaling. Functions as a transcription activator. Its function is as follows. May function as a repressor in tissues where both isoform 1 and isoform 2 are expressed. In Homo sapiens (Human), this protein is Grainyhead-like protein 1 homolog.